The primary structure comprises 872 residues: Facilitated trehalose transporter Tret1 (872 aa).

4 disordered regions span residues 1-40 (MSGRDNRGAGGGGGGGGGGSGGGHHHHQPLSSAMGKLKEK), 53-217 (VESN…KATS), 262-281 (SSSEEEFHKTRREFQGRKHQ), and 293-315 (KVLQGSSTDSDEEGDDAEHKRLI). The Cytoplasmic segment spans residues 1–406 (MSGRDNRGAG…VYRPTTNPIY (406 aa)). The span at 8 to 22 (GAGGGGGGGGGGSGG) shows a compositional bias: gly residues. 3 stretches are compositionally biased toward low complexity: residues 55-68 (SNLSTSNTATSLDT), 84-98 (RHPQQSPSQSQQQQR), and 121-132 (PPTQQQPQQQHQ). 3 positions are modified to phosphoserine: Ser262, Ser263, and Ser264. Residues Ser334 and Ser336 each carry the phosphoserine modification. Residues 340–361 (FLTSRQHFQQQRSISTDSRKSR) are disordered. Residues 344-355 (RQHFQQQRSIST) are compositionally biased toward polar residues. The helical transmembrane segment at 407–427 (IWTQVLAALSVSLGSLVVGFV) threads the bilayer. The Extracellular segment spans residues 428–454 (SAYTSPALITMTNGNITSFEVTPQAAS). A glycan (N-linked (GlcNAc...) asparagine) is linked at Asn442. Residues 455 to 475 (WVGGIMPLAGLLGGIAGGPFI) traverse the membrane as a helical segment. At 476–488 (EYLGRRNTILTTA) the chain is on the cytoplasmic side. The chain crosses the membrane as a helical span at residues 489-509 (VPFIVSSLLIACAVNITMVLL). At 510 to 511 (GR) the chain is on the extracellular side. A helical transmembrane segment spans residues 512–532 (FLAGFCVGIASLSLPVYLGET). Residues 533 to 538 (VQPEVR) are Cytoplasmic-facing. A helical membrane pass occupies residues 539–559 (GTLGLLPTAFGNIGILLCFVA). The Extracellular segment spans residues 560–566 (GTYMDWS). A helical membrane pass occupies residues 567–587 (MLAFLGAALPVPFLILMFLIP). The Cytoplasmic segment spans residues 588 to 650 (ETPRWYVSRG…ELLKRNNLKP (63 aa)). Residues 651 to 671 (LSISLGLMFFQQLSGINAVIF) form a helical membrane-spanning segment. The Extracellular segment spans residues 672–687 (YTVQIFKDAGSTIDGN). A helical membrane pass occupies residues 688 to 708 (VCTIIVGIVNFMATFIGIILI). Residues 709-714 (DRAGRK) lie on the Cytoplasmic side of the membrane. A helical transmembrane segment spans residues 715-735 (ILLYVSNVAMIITLFVLGGFF). At 736-755 (YCKDKAGIDVSNVGWLPLSC) the chain is on the extracellular side. A helical transmembrane segment spans residues 756–776 (FVVYILGFSLGFGPIPWLMMG). The Cytoplasmic segment spans residues 777–784 (EILPAKIR). Residues 785–803 (GSAASVATAFNWTCTFVVT) traverse the membrane as a helical segment. At 804–816 (KTFQDMLDVIGSY) the chain is on the extracellular side. Residues 817 to 837 (GAFWLFGAICFIGLFFVIIYV) traverse the membrane as a helical segment. Residues 838–872 (PETQGKTLEDIERKMMGRVRRMSSVANIKPLSFNM) lie on the Cytoplasmic side of the membrane. Phosphoserine is present on residues Ser860 and Ser861.

It belongs to the major facilitator superfamily. Sugar transporter (TC 2.A.1.1) family. Trehalose transporter subfamily.

The protein localises to the cell membrane. In terms of biological role, low-capacity facilitative transporter for trehalose. Does not transport maltose, sucrose or lactose. Mediates the bidirectional transfer of trehalose. Responsible for the transport of trehalose synthesized in the fat body and the incorporation of trehalose into other tissues that require a carbon source, thereby regulating trehalose levels in the hemolymph. This chain is Facilitated trehalose transporter Tret1, found in Drosophila willistoni (Fruit fly).